The sequence spans 127 residues: F420-non-reducing hydrogenase subunit G (127 aa).

This sequence belongs to the [NiFe]/[NiFeSe] hydrogenase small subunit family. As to quaternary structure, the F420-non-reducing hydrogenase is composed of three subunits; MvhA, MvhD and MvhG. It forms a complex with the heterodisulfide reductase (hdr).

Its function is as follows. Part of a complex that provides reducing equivalents for heterodisulfide reductase. The sequence is that of F420-non-reducing hydrogenase subunit G (mvhG) from Methanothermus fervidus.